A 331-amino-acid polypeptide reads, in one-letter code: MLEIDGSYGEGGGQLVRTAVALSAVTGQGIRITNIRKNRPSPGLKQQHLKALETAARICRAQISGLFPGSTEISFVPVEIEGGKYDIDIGTAGSITLLLQCIMPALPFAKEKVELTIKGGTDVAWSPTIDYLQHVTFRALEQLGYSGSITLKEHGYYPKGGGKVSAYFKPCRLREFHFLKEKEDIKGSSHASNLPAHVPLRQAEAASKRLMEAGYPSLIETQSFEAFSIGSGITLWIGYIGGSALGERGLPAEKVGKNAADEIIPELRSGASVDTHLADQLIPYMALAGNSSYTVRELSLHTTTNIWVTEQFLDVKFRIEKKEGLFEVSVS.

ATP contacts are provided by residues Gln100 and 276-280 (HLADQ). The Tele-AMP-histidine intermediate role is filled by His301.

The protein belongs to the RNA 3'-terminal cyclase family. Type 1 subfamily.

It localises to the cytoplasm. It carries out the reaction a 3'-end 3'-phospho-ribonucleotide-RNA + ATP = a 3'-end 2',3'-cyclophospho-ribonucleotide-RNA + AMP + diphosphate. Catalyzes the conversion of 3'-phosphate to a 2',3'-cyclic phosphodiester at the end of RNA. The mechanism of action of the enzyme occurs in 3 steps: (A) adenylation of the enzyme by ATP; (B) transfer of adenylate to an RNA-N3'P to produce RNA-N3'PP5'A; (C) and attack of the adjacent 2'-hydroxyl on the 3'-phosphorus in the diester linkage to produce the cyclic end product. The biological role of this enzyme is unknown but it is likely to function in some aspects of cellular RNA processing. The protein is RNA 3'-terminal phosphate cyclase of Methanosarcina barkeri (strain Fusaro / DSM 804).